Reading from the N-terminus, the 421-residue chain is C2H2 type master regulator of conidiophore development brlA (421 aa).

2 C2H2-type zinc fingers span residues 309–333 (FKCK…MKSH) and 339–364 (HVCW…TKTH). The tract at residues 379 to 421 (ESSPDYDPDFRGQLTPDGLPIRGSTLDDPMPNSREYSVDGLDD) is disordered.

Its subcellular location is the nucleus. BrlA, abaA and wetA are pivotal regulators of conidiophore development and conidium maturation. They act individually and together to regulate their own expression and that of numerous other sporulation-specific genes. Binds promoters of target genes at brlA response elements (BREs) containing the conserved sequence 5'-(C/A)(A/G)AGGG(G/A)-3'. Required for conidiophores formation. Controls expression of abaA. The polypeptide is C2H2 type master regulator of conidiophore development brlA (Aspergillus oryzae (strain ATCC 42149 / RIB 40) (Yellow koji mold)).